We begin with the raw amino-acid sequence, 545 residues long: CTP synthase (545 aa).

Residues methionine 1 to phenylalanine 266 form an amidoligase domain region. Serine 13 contacts CTP. Serine 13 lines the UTP pocket. Residues serine 14–isoleucine 19 and aspartate 71 contribute to the ATP site. Mg(2+)-binding residues include aspartate 71 and glutamate 140. CTP contacts are provided by residues aspartate 147–glutamate 149, lysine 187–glutamine 192, and lysine 223. UTP contacts are provided by residues lysine 187–glutamine 192 and lysine 223. Lysine 239 to alanine 241 is a binding site for ATP. One can recognise a Glutamine amidotransferase type-1 domain in the interval arginine 292–lysine 543. L-glutamine is bound at residue glycine 353. The active-site Nucleophile; for glutamine hydrolysis is cysteine 380. Residues leucine 381–glutamine 384, glutamate 404, and arginine 471 each bind L-glutamine. Catalysis depends on residues histidine 516 and glutamate 518.

The protein belongs to the CTP synthase family. In terms of assembly, homotetramer.

The catalysed reaction is UTP + L-glutamine + ATP + H2O = CTP + L-glutamate + ADP + phosphate + 2 H(+). It carries out the reaction L-glutamine + H2O = L-glutamate + NH4(+). It catalyses the reaction UTP + NH4(+) + ATP = CTP + ADP + phosphate + 2 H(+). It participates in pyrimidine metabolism; CTP biosynthesis via de novo pathway; CTP from UDP: step 2/2. Allosterically activated by GTP, when glutamine is the substrate; GTP has no effect on the reaction when ammonia is the substrate. The allosteric effector GTP functions by stabilizing the protein conformation that binds the tetrahedral intermediate(s) formed during glutamine hydrolysis. Inhibited by the product CTP, via allosteric rather than competitive inhibition. Catalyzes the ATP-dependent amination of UTP to CTP with either L-glutamine or ammonia as the source of nitrogen. Regulates intracellular CTP levels through interactions with the four ribonucleotide triphosphates. In Acinetobacter baumannii (strain ACICU), this protein is CTP synthase.